Consider the following 135-residue polypeptide: Small ribosomal subunit protein uS9 (135 aa).

Belongs to the universal ribosomal protein uS9 family.

The sequence is that of Small ribosomal subunit protein uS9 from Petrotoga mobilis (strain DSM 10674 / SJ95).